The sequence spans 917 residues: Outer membrane protein SlpA (917 aa).

The first 23 residues, methionine 1–alanine 23, serve as a signal peptide directing secretion. The 61-residue stretch at glutamine 24–glutamine 84 folds into the SLH domain.

In terms of assembly, homotrimer.

The protein localises to the cell outer membrane. In terms of biological role, plays an important role in the structural organization and integrity of the cell envelope, bridging the outer membrane to the peptidoglyan layer. Appears to be a nonselective channel. The sequence is that of Outer membrane protein SlpA (slpA) from Thermus thermophilus (strain ATCC 27634 / DSM 579 / HB8).